The primary structure comprises 539 residues: Phosphoenolpyruvate carboxykinase (ATP) (539 aa).

The substrate site is built by Arg59, Tyr200, and Lys206. ATP contacts are provided by residues Lys206, His225, and 242–250 (GLSGTGKTT). Lys206 and His225 together coordinate Mn(2+). Asp263 contributes to the Mn(2+) binding site. ATP is bound by residues Glu291, Arg327, 447-448 (RI), and Thr453. Arg327 provides a ligand contact to substrate.

This sequence belongs to the phosphoenolpyruvate carboxykinase (ATP) family. Mn(2+) serves as cofactor.

It localises to the cytoplasm. It carries out the reaction oxaloacetate + ATP = phosphoenolpyruvate + ADP + CO2. The protein operates within carbohydrate biosynthesis; gluconeogenesis. Involved in the gluconeogenesis. Catalyzes the conversion of oxaloacetate (OAA) to phosphoenolpyruvate (PEP) through direct phosphoryl transfer between the nucleoside triphosphate and OAA. The chain is Phosphoenolpyruvate carboxykinase (ATP) from Selenomonas ruminantium.